Consider the following 566-residue polypeptide: Proline--tRNA ligase (566 aa).

It belongs to the class-II aminoacyl-tRNA synthetase family. ProS type 1 subfamily. Homodimer.

The protein localises to the cytoplasm. It carries out the reaction tRNA(Pro) + L-proline + ATP = L-prolyl-tRNA(Pro) + AMP + diphosphate. Functionally, catalyzes the attachment of proline to tRNA(Pro) in a two-step reaction: proline is first activated by ATP to form Pro-AMP and then transferred to the acceptor end of tRNA(Pro). As ProRS can inadvertently accommodate and process non-cognate amino acids such as alanine and cysteine, to avoid such errors it has two additional distinct editing activities against alanine. One activity is designated as 'pretransfer' editing and involves the tRNA(Pro)-independent hydrolysis of activated Ala-AMP. The other activity is designated 'posttransfer' editing and involves deacylation of mischarged Ala-tRNA(Pro). The misacylated Cys-tRNA(Pro) is not edited by ProRS. In Bacillus mycoides (strain KBAB4) (Bacillus weihenstephanensis), this protein is Proline--tRNA ligase.